The chain runs to 876 residues: DNA mismatch repair protein MutS (876 aa).

628–635 (GPNMAGKS) provides a ligand contact to ATP.

It belongs to the DNA mismatch repair MutS family.

This protein is involved in the repair of mismatches in DNA. It is possible that it carries out the mismatch recognition step. This protein has a weak ATPase activity. In Chlorobaculum parvum (strain DSM 263 / NCIMB 8327) (Chlorobium vibrioforme subsp. thiosulfatophilum), this protein is DNA mismatch repair protein MutS.